Reading from the N-terminus, the 610-residue chain is Elongation factor 4 (610 aa).

The tr-type G domain occupies 7–189 (SRIRNFSIIA…AIVQRIPPPK (183 aa)). Residues 19–24 (DHGKST) and 136–139 (NKID) each bind GTP.

Belongs to the TRAFAC class translation factor GTPase superfamily. Classic translation factor GTPase family. LepA subfamily.

It localises to the cell inner membrane. It carries out the reaction GTP + H2O = GDP + phosphate + H(+). Required for accurate and efficient protein synthesis under certain stress conditions. May act as a fidelity factor of the translation reaction, by catalyzing a one-codon backward translocation of tRNAs on improperly translocated ribosomes. Back-translocation proceeds from a post-translocation (POST) complex to a pre-translocation (PRE) complex, thus giving elongation factor G a second chance to translocate the tRNAs correctly. Binds to ribosomes in a GTP-dependent manner. This chain is Elongation factor 4, found in Thermus thermophilus (strain ATCC 27634 / DSM 579 / HB8).